A 191-amino-acid chain; its full sequence is Probable GTP-binding protein EngB (191 aa).

One can recognise an EngB-type G domain in the interval 22–191; that stretch reads DFDHFLILGR…KLINEEFSNE (170 aa). Residues 30-37, 57-61, 75-78, 142-145, and 172-174 each bind GTP; these read GRSNVGKS, GKTIT, DAPG, TKYD, and TSS. Mg(2+) contacts are provided by serine 37 and threonine 59.

This sequence belongs to the TRAFAC class TrmE-Era-EngA-EngB-Septin-like GTPase superfamily. EngB GTPase family. The cofactor is Mg(2+).

Its function is as follows. Necessary for normal cell division and for the maintenance of normal septation. This chain is Probable GTP-binding protein EngB, found in Acholeplasma laidlawii (strain PG-8A).